Reading from the N-terminus, the 193-residue chain is Ion-translocating oxidoreductase complex subunit A (193 aa).

6 consecutive transmembrane segments (helical) span residues 5–25 (VLLLIGTVLVNNFVLVQFLGL), 39–59 (IGMSLATTFVLTLASVTSYLV), 63–83 (ILIPLDITYLRTMSFILVIAV), 102–122 (LLGIFLPLITTNCAVLGVALL), 134–154 (AVYGFGAAVGFSLVLVLFAAL), and 171–191 (SIALITAGLMSMAFMGFTGLV).

It belongs to the NqrDE/RnfAE family. In terms of assembly, the complex is composed of six subunits: RnfA, RnfB, RnfC, RnfD, RnfE and RnfG.

Its subcellular location is the cell inner membrane. Its function is as follows. Part of a membrane-bound complex that couples electron transfer with translocation of ions across the membrane. In Pseudoalteromonas translucida (strain TAC 125), this protein is Ion-translocating oxidoreductase complex subunit A.